A 215-amino-acid chain; its full sequence is Hibernation-associated plasma protein HP-25 (215 aa).

The signal sequence occupies residues 1–28 (MPAQRGGALSMGAAGFWILVLSITSALA). The tract at residues 29 to 96 (DSNNQGNSEP…RPKSAFAVKL (68 aa)) is disordered. 2 stretches are compositionally biased toward pro residues: residues 39-51 (CGPP…PGIP) and 60-77 (LGPP…PQGP). The region spanning 40–81 (GPPGPPGPPGIPGFPGAPGALGPPGPPGVPGIPGPQGPPGDV) is the Collagen-like domain. The C1q domain maps to 85 to 215 (SSRPKSAFAV…VFFGYLLYGK (131 aa)). Asn167 carries N-linked (GlcNAc...) asparagine glycosylation.

In terms of tissue distribution, plasma; synthesized in the liver.

The protein localises to the secreted. Plasma proteins HP-20, HP-25, HP-27 and HP-55 form a 140 kDa complex via disulfide bonds in the plasma and are hibernation specific. This is Hibernation-associated plasma protein HP-25 from Tamias sibiricus (Siberian chipmunk).